The primary structure comprises 230 residues: Ribonuclease 3 (230 aa).

The 116-residue stretch at 19-134 folds into the RNase III domain; that stretch reads ELLTIALTHR…LLGAIYLEHG (116 aa). Mg(2+) is bound at residue Glu-44. Residue Asp-48 is part of the active site. Asp-120 and Glu-123 together coordinate Mg(2+). The DRBM domain occupies 161–229; the sequence is DWKSSLQELT…AASAYKTLDE (69 aa).

The protein belongs to the ribonuclease III family. As to quaternary structure, homodimer. Mg(2+) serves as cofactor.

Its subcellular location is the cytoplasm. The catalysed reaction is Endonucleolytic cleavage to 5'-phosphomonoester.. In terms of biological role, digests double-stranded RNA. Involved in the processing of primary rRNA transcript to yield the immediate precursors to the all rRNAs (23S, 16S and 5S). Processes some mRNAs, and tRNAs when they are encoded in the rRNA operon. Processes pre-crRNA and tracrRNA of type II CRISPR loci if present in the organism. This chain is Ribonuclease 3 (rnc), found in Mycolicibacterium smegmatis (strain ATCC 700084 / mc(2)155) (Mycobacterium smegmatis).